Here is a 396-residue protein sequence, read N- to C-terminus: Cell division protein FtsZ 1 (396 aa).

Residues 1–38 are disordered; it reads MDSIVQDAIDEAEESEDSASEPADVAGGGGDTVPTGTM. The segment covering 8 to 19 has biased composition (acidic residues); that stretch reads AIDEAEESEDSA. Residues 61 to 65, 148 to 150, E179, R183, and D226 each bind GTP; these read GAGSN and GTG. The tract at residues 358–396 is disordered; it reads QIYGRNEAAEGDGPAQESTPEPEPEPQAGSEIEDIDYVE.

The protein belongs to the FtsZ family. As to quaternary structure, homodimer. Polymerizes to form a dynamic ring structure in a strictly GTP-dependent manner. Interacts directly with several other division proteins.

The protein localises to the cytoplasm. Functionally, essential cell division protein that forms a contractile ring structure (Z ring) at the future cell division site. The regulation of the ring assembly controls the timing and the location of cell division. One of the functions of the FtsZ ring is to recruit other cell division proteins to the septum to produce a new cell wall between the dividing cells. Binds GTP and shows GTPase activity. This chain is Cell division protein FtsZ 1, found in Halobacterium salinarum (strain ATCC 29341 / DSM 671 / R1).